The sequence spans 833 residues: P protein (833 aa).

At 1–172 the chain is on the cytoplasmic side; sequence MRLENKDIRL…QVSKLGCCVR (172 aa). A helical transmembrane segment spans residues 173–193; it reads WIKITGLFVFVVLCSILFSLY. The Extracellular portion of the chain corresponds to 194–325; it reads PDQGKFWQLL…QFLGASVEAQ (132 aa). 3 N-linked (GlcNAc...) asparagine glycosylation sites follow: N210, N214, and N269. Residues 326–346 form a helical membrane-spanning segment; sequence VASAVAILAGVYTLIIFEIVH. Topologically, residues 347–348 are cytoplasmic; the sequence is RT. A helical transmembrane segment spans residues 349-369; sequence LAAMLGALAALAALAVVGDRP. The Extracellular portion of the chain corresponds to 370–381; it reads SLTHVVEWIDFE. Residues 382–402 form a helical membrane-spanning segment; that stretch reads TLALLFGMMILVAVFSETGFF. At 403–417 the chain is on the cytoplasmic side; the sequence is DYCAVKAYQLSRGRV. A helical transmembrane segment spans residues 418–438; sequence WAMIFMLCLMAAILSAFLDNV. Topologically, residues 439–501 are extracellular; sequence TTMLLFTPVT…ELRKMGLDFA (63 aa). Residues 502-522 form a helical membrane-spanning segment; that stretch reads GFTAHMFLGICLVLLVSFPLL. Topologically, residues 523–617 are cytoplasmic; sequence RLLYWNKKLY…RKHRISDRSL (95 aa). The chain crosses the membrane as a helical span at residues 618 to 638; that stretch reads LVKCLTVLGFVISMFFLNSFV. Residue P639 is a topological domain, extracellular. A helical membrane pass occupies residues 640–660; the sequence is GIHLDLGWIAILGAIWLLILA. Topologically, residues 661 to 675 are cytoplasmic; that stretch reads DIHDFEIILHRVEWA. The helical transmembrane segment at 676-696 threads the bilayer; sequence TLLFFAALFVLMEALTHLHLV. The Extracellular segment spans residues 697–718; the sequence is EYVGEQTALLIKMVPEDQRFAA. The chain crosses the membrane as a helical span at residues 719 to 739; that stretch reads AIVLIVWVSALASSLIDNIPF. The Cytoplasmic portion of the chain corresponds to 740 to 759; sequence TATMIPVLLNLSQDPEISLP. A helical membrane pass occupies residues 760–780; sequence ALPLMYALALGACLGGNGTLI. The Extracellular segment spans residues 781 to 810; it reads GASTNVVCAGIAEKHGYGFSFMEFFRLGFP. The helical transmembrane segment at 811-831 threads the bilayer; the sequence is VMLMSCTIGMCYLLIAHIVVG. Topologically, residues 832–833 are cytoplasmic; it reads WN.

This sequence belongs to the CitM (TC 2.A.11) transporter family. As to expression, most abundant in melanocytes. Also present in neonatal and adult eye tissue presumably as a result of expression in the retinal pigmented epithelium and choroid body, known sites of melanogenesis in the eye. Small but detectable amounts also observed in fetal, neonatal and adult brain. Moderate amounts detected in adult testis and ovary. Not detected in heart, kidney, spleen, liver or thymus.

Its subcellular location is the melanosome membrane. It carries out the reaction chloride(in) = chloride(out). Functionally, contributes to a melanosome-specific anion (chloride) current that modulates melanosomal pH for optimal tyrosinase activity required for melanogenesis and the melanosome maturation. One of the components of the mammalian pigmentary system. May serve as a key control point at which color variation is determined. Major determinant of eye color. Seems to regulate the post-translational processing of tyrosinase, which catalyzes the limiting reaction in melanin synthesis. The protein is P protein (Oca2) of Mus musculus (Mouse).